We begin with the raw amino-acid sequence, 126 residues long: Outer membrane lipoprotein omp10 (126 aa).

An N-terminal signal peptide occupies residues 1-19; the sequence is MKRFRIVAPLALMSLALAA. Cys-20 carries the N-palmitoyl cysteine lipid modification. Cys-20 is lipidated: S-diacylglycerol cysteine.

Belongs to the rhizobiaceae omp10 lipoprotein family.

It localises to the cell outer membrane. The sequence is that of Outer membrane lipoprotein omp10 (omp10) from Brucella abortus biovar 1 (strain 9-941).